The chain runs to 23 residues: Phallacidin proprotein 1 (23 aa).

A propeptide is located at residue Pro-1. The cyclopeptide (Ala-Pro) cross-link spans 2-8 (AWLVDCP). The 2'-cysteinyl-6'-hydroxytryptophan sulfoxide (Trp-Cys) cross-link spans 3-7 (WLVDC). A propeptide spanning residues 9-23 (CVGDDINRLLTRGEK) is cleaved from the precursor.

This sequence belongs to the MSDIN fungal toxin family. Processed by the macrocyclase-peptidase enzyme POPB to yield a toxic cyclic heptapeptide. POPB first removes 10 residues from the N-terminus. Conformational trapping of the remaining peptide forces the enzyme to release this intermediate rather than proceed to macrocyclization. The enzyme rebinds the remaining peptide in a different conformation and catalyzes macrocyclization of the N-terminal 7 residues.

In terms of biological role, major toxin that belongs to the bicyclic heptapeptides called phallotoxins. Although structurally related to amatoxins, phallotoxins have a different mode of action, which is the stabilization of F-actin. Phallotoxins are poisonous when administered parenterally, but not orally because of poor absorption. This Amanita phalloides (Death cap) protein is Phallacidin proprotein 1.